We begin with the raw amino-acid sequence, 975 residues long: Glycine dehydrogenase (decarboxylating) (975 aa).

Lys-723 is subject to N6-(pyridoxal phosphate)lysine.

Belongs to the GcvP family. The glycine cleavage system is composed of four proteins: P, T, L and H. Pyridoxal 5'-phosphate serves as cofactor.

It catalyses the reaction N(6)-[(R)-lipoyl]-L-lysyl-[glycine-cleavage complex H protein] + glycine + H(+) = N(6)-[(R)-S(8)-aminomethyldihydrolipoyl]-L-lysyl-[glycine-cleavage complex H protein] + CO2. Its function is as follows. The glycine cleavage system catalyzes the degradation of glycine. The P protein binds the alpha-amino group of glycine through its pyridoxal phosphate cofactor; CO(2) is released and the remaining methylamine moiety is then transferred to the lipoamide cofactor of the H protein. The chain is Glycine dehydrogenase (decarboxylating) from Burkholderia multivorans (strain ATCC 17616 / 249).